The sequence spans 109 residues: Guanylate cyclase activator 2B (109 aa).

An N-terminal signal peptide occupies residues 1–23 (MKVLALPVAVAAMLLVLAQNTQS). Positions 24–94 (VYIQYEGFQV…NIFRALRSIS (71 aa)) are excised as a propeptide. Cystine bridges form between C65/C78, C98/C106, and C101/C109.

The protein belongs to the guanylin family. In terms of tissue distribution, small and large intestine and atria and ventricles of heart. Both uroguanylin and prouroguanylin are found in plasma.

The protein resides in the secreted. In terms of biological role, endogenous activator of intestinal guanylate cyclase. It stimulates this enzyme through the same receptor binding region as the heat-stable enterotoxins. May be a potent physiological regulator of intestinal fluid and electrolyte transport. May be an autocrine/paracrine regulator of intestinal salt and water transport. The protein is Guanylate cyclase activator 2B (GUCA2B) of Didelphis virginiana (North American opossum).